Here is a 93-residue protein sequence, read N- to C-terminus: Putative regulatory protein LBL_1834 (93 aa).

It belongs to the RemA family.

The polypeptide is Putative regulatory protein LBL_1834 (Leptospira borgpetersenii serovar Hardjo-bovis (strain L550)).